We begin with the raw amino-acid sequence, 211 residues long: MFKRLMMVALLVIAPLSAATAADQTNPYKLMDEAAQKTFDRLKNEQPQIRANPDYLRTIVDQELLPYVQVKYAGALVLGQYYKSATPAQREAYFAAFREYLKQAYGQALAMYHGQTYQIAPEQPLGDKTIVPIRVTIIDPNGRPPVRLDFQWRKNSQTGNWQAYDMIAEGVSMITTKQNEWGTLLRTKGIDGLTAQLKSISQQKITLEEKK.

A signal peptide spans 1 to 21 (MFKRLMMVALLVIAPLSAATA).

It belongs to the MlaC/ttg2D family. Interacts with the MlaA-OmpF outer membrane complex and with the inner membrane ABC transporter complex MlaFEDB, via direct interaction with MlaD.

The protein localises to the periplasm. Its function is as follows. Involved in a phospholipid transport pathway that maintains lipid asymmetry in the outer membrane by retrograde trafficking of phospholipids from the outer membrane to the inner membrane. May transfer phospholipid across the periplasmic space and deliver it to the MlaFEDB complex at the inner membrane. The chain is Intermembrane phospholipid transport system binding protein MlaC from Escherichia coli (strain K12).